Consider the following 439-residue polypeptide: Cysteine--tRNA ligase (439 aa).

Zn(2+) is bound at residue C26. A 'HIGH' region motif is present at residues 28 to 38; sequence PTVYNHVHIGN. Positions 206, 231, and 235 each coordinate Zn(2+). A 'KMSKS' region motif is present at residues 263-267; it reads KMSKS. Residue K266 coordinates ATP.

Belongs to the class-I aminoacyl-tRNA synthetase family. As to quaternary structure, monomer. The cofactor is Zn(2+).

The protein resides in the cytoplasm. It catalyses the reaction tRNA(Cys) + L-cysteine + ATP = L-cysteinyl-tRNA(Cys) + AMP + diphosphate. This chain is Cysteine--tRNA ligase, found in Malacoplasma penetrans (strain HF-2) (Mycoplasma penetrans).